The primary structure comprises 188 residues: Adenine phosphoribosyltransferase (188 aa).

Belongs to the purine/pyrimidine phosphoribosyltransferase family. In terms of assembly, homodimer.

Its subcellular location is the cytoplasm. It catalyses the reaction AMP + diphosphate = 5-phospho-alpha-D-ribose 1-diphosphate + adenine. It participates in purine metabolism; AMP biosynthesis via salvage pathway; AMP from adenine: step 1/1. Catalyzes a salvage reaction resulting in the formation of AMP, that is energically less costly than de novo synthesis. This chain is Adenine phosphoribosyltransferase, found in Burkholderia vietnamiensis (strain G4 / LMG 22486) (Burkholderia cepacia (strain R1808)).